A 266-amino-acid chain; its full sequence is Cytochrome c oxidase subunit 2 (266 aa).

Over 1–43 (MTITNYINNQFTFLDMAEPWQLGFQDPATPVMEGIINFHHDLM) the chain is Mitochondrial intermembrane. The helical transmembrane segment at 44–64 (FFLISIVVFVCWMLFRVITLF) threads the bilayer. Residues 65-82 (DEKKNKIPATVVHGATIE) are Mitochondrial matrix-facing. Residues 83–103 (IIWTSIPALILLTVAVPSFAL) traverse the membrane as a helical segment. The Mitochondrial intermembrane portion of the chain corresponds to 104 to 266 (LYSMDEVIDP…NVXLIKFYGI (163 aa)). 6 residues coordinate Cu cation: H186, C221, E223, C225, H229, and M232. E223 contributes to the Mg(2+) binding site.

It belongs to the cytochrome c oxidase subunit 2 family. In terms of assembly, component of the cytochrome c oxidase (complex IV, CIV), a multisubunit enzyme composed of a catalytic core of 3 subunits and several supernumerary subunits. The complex exists as a monomer or a dimer and forms supercomplexes (SCs) in the inner mitochondrial membrane with ubiquinol-cytochrome c oxidoreductase (cytochrome b-c1 complex, complex III, CIII). The cofactor is Cu cation.

The protein resides in the mitochondrion inner membrane. The catalysed reaction is 4 Fe(II)-[cytochrome c] + O2 + 8 H(+)(in) = 4 Fe(III)-[cytochrome c] + 2 H2O + 4 H(+)(out). Its function is as follows. Component of the cytochrome c oxidase, the last enzyme in the mitochondrial electron transport chain which drives oxidative phosphorylation. The respiratory chain contains 3 multisubunit complexes succinate dehydrogenase (complex II, CII), ubiquinol-cytochrome c oxidoreductase (cytochrome b-c1 complex, complex III, CIII) and cytochrome c oxidase (complex IV, CIV), that cooperate to transfer electrons derived from NADH and succinate to molecular oxygen, creating an electrochemical gradient over the inner membrane that drives transmembrane transport and the ATP synthase. Cytochrome c oxidase is the component of the respiratory chain that catalyzes the reduction of oxygen to water. Electrons originating from reduced cytochrome c in the intermembrane space (IMS) are transferred via the dinuclear copper A center (CU(A)) of subunit 2 and heme A of subunit 1 to the active site in subunit 1, a binuclear center (BNC) formed by heme A3 and copper B (CU(B)). The BNC reduces molecular oxygen to 2 water molecules using 4 electrons from cytochrome c in the IMS and 4 protons from the mitochondrial matrix. This chain is Cytochrome c oxidase subunit 2 (COX2), found in Phytophthora megasperma (Potato pink rot fungus).